The following is a 156-amino-acid chain: MSMKMKGIYKGFKCISQIFAVEKERDEIEIGFPTDVKHVAHIGWEGSSGSAPGWMSEFKVGAELLSPRPSSFSNARPSTSFFTSSSSTDFDQGSSQRGISDTLRDIPPVTPINLPKNNKKKSSRRKKSSSSSSSPKSSRSSVLSKSSYKSTVSRLI.

In terms of domain architecture, CRIB spans 30–43; that stretch reads IGFPTDVKHVAHIG. A compositionally biased stretch (polar residues) spans 68-77; that stretch reads RPSSFSNARP. The segment at 68–156 is disordered; that stretch reads RPSSFSNARP…SYKSTVSRLI (89 aa). Residues 78–96 show a composition bias toward low complexity; the sequence is STSFFTSSSSTDFDQGSSQ. Positions 117-128 are enriched in basic residues; that stretch reads NNKKKSSRRKKS. The span at 129 to 156 shows a compositional bias: low complexity; the sequence is SSSSSSPKSSRSSVLSKSSYKSTVSRLI.

In terms of tissue distribution, expressed in roots, leaves, flowers and pollen.

It is found in the cytoplasm. In terms of biological role, functions as a downstream effector of Rho-related GTP binding proteins of the 'Rho of Plants' (ROPs) family. Participates in the propagation of ROP GTPase signals in specific cellular responses. Is involved in pollen tube growth regulation. The sequence is that of CRIB domain-containing protein RIC10 (RIC10) from Arabidopsis thaliana (Mouse-ear cress).